Reading from the N-terminus, the 162-residue chain is Ribose-5-phosphate isomerase B (162 aa).

Residues 11-12 (DH) and 70-74 (GSGNG) contribute to the D-ribulose 5-phosphate site. Glu75 serves as the catalytic Proton acceptor. Residue His102 is the Proton donor of the active site. Residues Asn103, Arg113, Arg137, and Arg141 each coordinate D-ribulose 5-phosphate.

Belongs to the LacAB/RpiB family. As to quaternary structure, homodimer.

The enzyme catalyses aldehydo-D-ribose 5-phosphate = D-ribulose 5-phosphate. It functions in the pathway carbohydrate degradation; pentose phosphate pathway; D-ribose 5-phosphate from D-ribulose 5-phosphate (non-oxidative stage): step 1/1. Catalyzes the interconversion of ribulose-5-P and ribose-5-P. The chain is Ribose-5-phosphate isomerase B from Mycobacterium leprae (strain TN).